The primary structure comprises 201 residues: Lipoprotein signal peptidase (201 aa).

A run of 3 helical transmembrane segments spans residues 33–53 (LLLSIAAVVLTLDIVTKVLAV), 86–106 (GYTWVLTLIATGVVIGIFWMG), and 110–130 (VSSWWALGLGMILGGAMGNLV). Catalysis depends on residues aspartate 146 and aspartate 160. Residues 158 to 178 (VADPSVVVGAILLVVLSIFGF) form a helical membrane-spanning segment.

Belongs to the peptidase A8 family.

The protein localises to the cell membrane. The catalysed reaction is Release of signal peptides from bacterial membrane prolipoproteins. Hydrolyzes -Xaa-Yaa-Zaa-|-(S,diacylglyceryl)Cys-, in which Xaa is hydrophobic (preferably Leu), and Yaa (Ala or Ser) and Zaa (Gly or Ala) have small, neutral side chains.. Its pathway is protein modification; lipoprotein biosynthesis (signal peptide cleavage). Functionally, this protein specifically catalyzes the removal of signal peptides from prolipoproteins. This is Lipoprotein signal peptidase from Mycobacterium leprae (strain Br4923).